A 196-amino-acid polypeptide reads, in one-letter code: Neuropeptide prohormone-4 (196 aa).

The N-terminal stretch at 1–25 (MSSPLRMDVTFLLAAIAVTWVCGLK) is a signal peptide. Residues 50–90 (DCDIASPFKCEESPTCLRLFQVCNGRWDCEHGSDEDNALCA) enclose the LDL-receptor class A domain. Disulfide bonds link C51–C65, C59–C78, and C72–C89.

Expressed by the venom duct.

The protein localises to the secreted. The protein is Neuropeptide prohormone-4 of Conus victoriae (Queen Victoria cone).